A 709-amino-acid polypeptide reads, in one-letter code: MGMSKSRGCFGYPLSIFFIVVNEFCERFSYYGMRALLVLYFRNFLGWDDNLSTAIYHTFVALCYLTPILGALIADSWLGKFKTIVSLSIVYTIGQAVISVSSINDLTDHDHNGSPDSLPVHVALSMVGLALIALGTGGIKPCVSAFGGDQFEEGQEKQRNRFFSIFYLAINGGSLLSTIITPILRVQQCGIHSQQACYPLAFGVPAALMAVALIVFVLGSGMYKKFQPQGNIMGKVAKCIGFAIKNRFRHRSKAYPKREHWLDWAKEKYDERLISQIKMVTKVMFLYIPLPMFWALFDQQGSRWTLQATTMNGKIGAIEIQPDQMQTVNAILIVIMVPIVDAVVYPLIAKCGFNFTSLKKMTVGMFLASMAFVVAAIVQVEIDKTLPVFPGGNQVQIKVLNIGNNNMTVHFPGNSVTLAQMSQTDTFMTFDIDKLTSINISSSGSPGVTTVAHDFEQGHRHTLLVWNPSQYRVVKDGLNQKPEKGENGIRFVNTLNEMVTIKMSGKVYENVTSHNASGYQFFPSGEKQYTINTTAVAPTCLTDFKSSNLDFGSAYTYVIRRASDGCLEVKEFEDIPPNTVNMALQIPQYFLLTCGEVVFSVTGLEFSYSQAPSNMKSVLQAGWLLTVAVGNIIVLIVAGAGHFPKQWAEYILFASLLLVVCVIFAIMARFYTYINPAEIEAQFDEDEKKKGIGKENPYSSLEPVSQTNM.

The chain crosses the membrane as a helical span at residues 1–21 (MGMSKSRGCFGYPLSIFFIVV). Residues 22 to 53 (NEFCERFSYYGMRALLVLYFRNFLGWDDNLST) are Extracellular-facing. A glycan (N-linked (GlcNAc...) asparagine) is linked at Asn50. The helical transmembrane segment at 54-74 (AIYHTFVALCYLTPILGALIA) threads the bilayer. The Cytoplasmic segment spans residues 75–82 (DSWLGKFK). The helical transmembrane segment at 83-103 (TIVSLSIVYTIGQAVISVSSI) threads the bilayer. Residues 104 to 118 (NDLTDHDHNGSPDSL) are Extracellular-facing. Residues 119 to 139 (PVHVALSMVGLALIALGTGGI) form a helical membrane-spanning segment. The Cytoplasmic portion of the chain corresponds to 140-161 (KPCVSAFGGDQFEEGQEKQRNR). Residues 162–182 (FFSIFYLAINGGSLLSTIITP) form a helical membrane-spanning segment. The Extracellular portion of the chain corresponds to 183–198 (ILRVQQCGIHSQQACY). Residues 199–219 (PLAFGVPAALMAVALIVFVLG) form a helical membrane-spanning segment. Over 220 to 276 (SGMYKKFQPQGNIMGKVAKCIGFAIKNRFRHRSKAYPKREHWLDWAKEKYDERLISQ) the chain is Cytoplasmic. A helical transmembrane segment spans residues 277–297 (IKMVTKVMFLYIPLPMFWALF). At 298 to 327 (DQQGSRWTLQATTMNGKIGAIEIQPDQMQT) the chain is on the extracellular side. A helical transmembrane segment spans residues 328–348 (VNAILIVIMVPIVDAVVYPLI). Topologically, residues 349-361 (AKCGFNFTSLKKM) are cytoplasmic. A helical transmembrane segment spans residues 362 to 382 (TVGMFLASMAFVVAAIVQVEI). The Extracellular portion of the chain corresponds to 383-585 (DKTLPVFPGG…PPNTVNMALQ (203 aa)). The segment at 383-585 (DKTLPVFPGG…PPNTVNMALQ (203 aa)) is extracellular domain (ECD). Asn406, Asn439, Asn515, and Asn532 each carry an N-linked (GlcNAc...) asparagine glycan. Residues 586 to 606 (IPQYFLLTCGEVVFSVTGLEF) traverse the membrane as a helical segment. The Cytoplasmic portion of the chain corresponds to 607–620 (SYSQAPSNMKSVLQ). Residues 621-641 (AGWLLTVAVGNIIVLIVAGAG) traverse the membrane as a helical segment. At 642 to 646 (HFPKQ) the chain is on the extracellular side. A helical transmembrane segment spans residues 647 to 667 (WAEYILFASLLLVVCVIFAIM). Topologically, residues 668-709 (ARFYTYINPAEIEAQFDEDEKKKGIGKENPYSSLEPVSQTNM) are cytoplasmic. The tract at residues 690–709 (KGIGKENPYSSLEPVSQTNM) is disordered. Residues 697-709 (PYSSLEPVSQTNM) are compositionally biased toward polar residues.

This sequence belongs to the major facilitator superfamily. Proton-dependent oligopeptide transporter (POT/PTR) (TC 2.A.17) family. Interacts (via extracellular domain region) with trypsin.

The protein resides in the apical cell membrane. It carries out the reaction a dipeptide(out) + H(+)(out) = a dipeptide(in) + H(+)(in). The enzyme catalyses an L-amino acid tripeptide(out) + H(+)(out) = an L-amino acid tripeptide(in) + H(+)(in). The catalysed reaction is L-alanyl-L-lysine(out) + H(+)(out) = L-alanyl-L-lysine(in) + H(+)(in). It catalyses the reaction L-alanyl-L-proline(out) + H(+)(out) = L-alanyl-L-proline(in) + H(+)(in). It carries out the reaction L-alanyl-L-valine(out) + H(+)(out) = L-alanyl-L-valine(in) + H(+)(in). The enzyme catalyses carnosine(out) + H(+)(out) = carnosine(in) + H(+)(in). The catalysed reaction is glycyl-L-glutamine(out) + H(+)(out) = glycyl-L-glutamine(in) + H(+)(in). It catalyses the reaction glycyl-L-leucine(out) + H(+)(out) = glycyl-L-leucine(in) + H(+)(in). It carries out the reaction glycyl-L-proline(out) + H(+)(out) = glycyl-L-proline(in) + H(+)(in). The enzyme catalyses glycyl-sarcosine(out) + H(+)(out) = glycyl-sarcosine(in) + H(+)(in). The catalysed reaction is L-leucyl-L-leucine(out) + H(+)(out) = L-leucyl-L-leucine(in) + H(+)(in). It catalyses the reaction L-leucyl-L-proline(out) + H(+)(out) = L-leucyl-L-proline(in) + H(+)(in). It carries out the reaction L-phenylalanyl-L-leucine(out) + H(+)(out) = L-phenylalanyl-L-leucine(in) + H(+)(in). The enzyme catalyses L-phenylalanyl-L-phenylalanine(out) + H(+)(out) = L-phenylalanyl-L-phenylalanine(in) + H(+)(in). The catalysed reaction is L-lysyl-glycine(out) + H(+)(out) = L-lysyl-glycine(in) + H(+)(in). It catalyses the reaction L-tyrosylglycine(out) + H(+)(out) = L-tyrosylglycine(in) + H(+)(in). It carries out the reaction L-alanyl-L-aspartate(out) + 2 H(+)(out) = L-alanyl-L-aspartate(in) + 2 H(+)(in). The enzyme catalyses L-aspartyl-glycine(out) + 2 H(+)(out) = L-aspartyl-glycine(in) + 2 H(+)(in). The catalysed reaction is glycyl-L-aspartate(out) + 2 H(+)(out) = glycyl-L-aspartate(in) + 2 H(+)(in). It catalyses the reaction glycyl-L-glutamate(out) + 2 H(+)(out) = glycyl-L-glutamate(in) + 2 H(+)(in). It carries out the reaction L-alanyl-L-leucyl-L-alanine(out) + H(+)(out) = L-alanyl-L-leucyl-L-alanine(in) + H(+)(in). The enzyme catalyses L-alanyl-L-prolylglycine(out) + H(+)(out) = L-alanyl-L-prolylglycine(in) + H(+)(in). The catalysed reaction is glycylglycyl-L-isoleucine(out) + H(+)(out) = glycylglycyl-L-isoleucine(in) + H(+)(in). It catalyses the reaction glycylglycyl-L-proline(out) + H(+)(out) = glycylglycyl-L-proline(in) + H(+)(in). It carries out the reaction L-methionyl-L-phenylalanyl-L-methionine(out) + H(+)(out) = L-methionyl-L-phenylalanyl-L-methionine(in) + H(+)(in). The enzyme catalyses N-acetyl-D-muramoyl-L-alanyl-D-isoglutamine(out) + 2 H(+)(out) = N-acetyl-D-muramoyl-L-alanyl-D-isoglutamine(in) + 2 H(+)(in). The catalysed reaction is N(alpha)-formyl-L-methionyl-L-leucyl-L-phenylalanine(out) + 2 H(+)(out) = N(alpha)-formyl-L-methionyl-L-leucyl-L-phenylalanine(in) + 2 H(+)(in). Electrogenic proton-coupled amino-acid transporter that transports oligopeptides of 2 to 4 amino acids with a preference for dipeptides. Transports neutral and monovalently charged peptides with a proton to peptide stoichiometry of 1:1 or 2:1. Primarily responsible for the absorption of dietary di- and tripeptides from the small intestinal lumen. Mediates transepithelial transport of muramyl and N-formylated bacterial dipeptides contributing to recognition of pathogenic bacteria by the mucosal immune system. In Mus musculus (Mouse), this protein is Solute carrier family 15 member 1.